We begin with the raw amino-acid sequence, 428 residues long: Light-independent protochlorophyllide reductase subunit N (428 aa).

[4Fe-4S] cluster is bound by residues C29, C54, and C115.

This sequence belongs to the BchN/ChlN family. In terms of assembly, protochlorophyllide reductase is composed of three subunits; BchL, BchN and BchB. Forms a heterotetramer of two BchB and two BchN subunits. [4Fe-4S] cluster serves as cofactor.

It catalyses the reaction chlorophyllide a + oxidized 2[4Fe-4S]-[ferredoxin] + 2 ADP + 2 phosphate = protochlorophyllide a + reduced 2[4Fe-4S]-[ferredoxin] + 2 ATP + 2 H2O. It participates in porphyrin-containing compound metabolism; bacteriochlorophyll biosynthesis (light-independent). Functionally, component of the dark-operative protochlorophyllide reductase (DPOR) that uses Mg-ATP and reduced ferredoxin to reduce ring D of protochlorophyllide (Pchlide) to form chlorophyllide a (Chlide). This reaction is light-independent. The NB-protein (BchN-BchB) is the catalytic component of the complex. This Cereibacter sphaeroides (strain ATCC 17023 / DSM 158 / JCM 6121 / CCUG 31486 / LMG 2827 / NBRC 12203 / NCIMB 8253 / ATH 2.4.1.) (Rhodobacter sphaeroides) protein is Light-independent protochlorophyllide reductase subunit N.